The following is a 534-amino-acid chain: Glycerol kinase 5 (534 aa).

Positions 33 and 34 each coordinate ATP. Glycerol-binding residues include arginine 103, aspartate 280, and glutamine 281. The ATP site is built by threonine 302, glycine 345, and glycine 445.

It belongs to the FGGY kinase family. In terms of tissue distribution, expressed predominantly in sebaceous glands.

Its subcellular location is the cytoplasm. The catalysed reaction is glycerol + ATP = sn-glycerol 3-phosphate + ADP + H(+). Its pathway is polyol metabolism; glycerol degradation via glycerol kinase pathway; sn-glycerol 3-phosphate from glycerol: step 1/1. Its function is as follows. Skin-specific kinase that plays a key role in glycerol metabolism, catalyzing its phosphorylation to produce sn-glycerol 3-phosphate. Involved in skin-specific regulation of sterol regulatory element-binding protein (SREBP) processing and lipid biosynthesis. The protein is Glycerol kinase 5 (Gk5) of Mus musculus (Mouse).